A 69-amino-acid chain; its full sequence is Copper chaperone CopZ (69 aa).

One can recognise an HMA domain in the interval 2–68 (EQKTLQVEGM…AIEDQGYDVA (67 aa)). Cu cation is bound by residues Cys13 and Cys16.

As to quaternary structure, monomer in the absence of copper. Homodimer in the presence of copper ions. Forms a heterodimer (electrostatic interactions) with CopA during the transfer of Cu(+).

The protein resides in the cytoplasm. Chaperone that serves for the intracellular sequestration and transport of Cu(+). Delivers Cu(+) to the copper-transporting ATPase CopA. Functions in E.coli to transfer Cu(+) to CopA missing its first metal-binding domain. This is Copper chaperone CopZ (copZ) from Bacillus subtilis (strain 168).